The chain runs to 100 residues: Aspartyl/glutamyl-tRNA(Asn/Gln) amidotransferase subunit C (100 aa).

This sequence belongs to the GatC family. Heterotrimer of A, B and C subunits.

It catalyses the reaction L-glutamyl-tRNA(Gln) + L-glutamine + ATP + H2O = L-glutaminyl-tRNA(Gln) + L-glutamate + ADP + phosphate + H(+). The enzyme catalyses L-aspartyl-tRNA(Asn) + L-glutamine + ATP + H2O = L-asparaginyl-tRNA(Asn) + L-glutamate + ADP + phosphate + 2 H(+). Allows the formation of correctly charged Asn-tRNA(Asn) or Gln-tRNA(Gln) through the transamidation of misacylated Asp-tRNA(Asn) or Glu-tRNA(Gln) in organisms which lack either or both of asparaginyl-tRNA or glutaminyl-tRNA synthetases. The reaction takes place in the presence of glutamine and ATP through an activated phospho-Asp-tRNA(Asn) or phospho-Glu-tRNA(Gln). In Streptococcus agalactiae serotype III (strain NEM316), this protein is Aspartyl/glutamyl-tRNA(Asn/Gln) amidotransferase subunit C.